We begin with the raw amino-acid sequence, 206 residues long: 2,3-bisphosphoglycerate-dependent phosphoglycerate mutase (206 aa).

Residues 9 to 16 (RHGQSEWN), 22 to 23 (TG), Arg-61, 88 to 91 (ERDY), Lys-99, 115 to 116 (RR), and 159 to 160 (GN) contribute to the substrate site. The Tele-phosphohistidine intermediate role is filled by His-10. Catalysis depends on Glu-88, which acts as the Proton donor/acceptor.

It belongs to the phosphoglycerate mutase family. BPG-dependent PGAM subfamily. In terms of assembly, homodimer.

It catalyses the reaction (2R)-2-phosphoglycerate = (2R)-3-phosphoglycerate. It functions in the pathway carbohydrate degradation; glycolysis; pyruvate from D-glyceraldehyde 3-phosphate: step 3/5. Functionally, catalyzes the interconversion of 2-phosphoglycerate and 3-phosphoglycerate. This Azorhizobium caulinodans (strain ATCC 43989 / DSM 5975 / JCM 20966 / LMG 6465 / NBRC 14845 / NCIMB 13405 / ORS 571) protein is 2,3-bisphosphoglycerate-dependent phosphoglycerate mutase.